A 935-amino-acid polypeptide reads, in one-letter code: Progesterone receptor (935 aa).

Residues 1 to 50 (MTELKAKGPRAPHVAGSPSSPKVGSPLPCSQAAGPFPGSQTSDTLPEASA) are disordered. Residues 1 to 164 (MTELKAKGPR…PATQRVLSPL (164 aa)) are AF3; mediates transcriptional activation. Residues 1–568 (MTELKAKGPR…YSFESLPQKI (568 aa)) are modulating, Pro-Rich. Ser20 carries the phosphoserine modification. Residues 55 to 59 (LDGLL) carry the LXXL motif 1 motif. Residues 62 to 159 (RICQGQDPTD…DPPAAPATQR (98 aa)) are disordered. Ser81 carries the post-translational modification Phosphoserine. Residues 115–119 (LDTLW) carry the LXXL motif 2 motif. 2 positions are modified to phosphoserine: Ser130 and Ser162. Residues 165–305 (MSRSGGKAGD…LATTVTDFIH (141 aa)) are mediates transcriptional transrepression. Positions 183–187 (KVLPR) match the Nuclear localization signal motif. The disordered stretch occupies residues 185–252 (LPRGLSPSRQ…ALGGAAAGGG (68 aa)). Ser190 is modified (phosphoserine). Polar residues predominate over residues 191–203 (PSRQLLLPTSGSP). Ser213 is subject to Phosphoserine. The segment covering 220-231 (EVEEEDGSESED) has biased composition (acidic residues). Over residues 232–246 (SAGPLLKGKPRALGG) the composition is skewed to low complexity. Phosphoserine; by MAPK1 is present on Ser294. The disordered stretch occupies residues 331 to 365 (GGAGAASAFAPPRSSPSASSTPVPGGDFPDCAYAP). Residues 335-356 (AASAFAPPRSSPSASSTPVPGG) are compositionally biased toward low complexity. Ser345 is subject to Phosphoserine; by MAPK. A Glycyl lysine isopeptide (Lys-Gly) (interchain with G-Cter in SUMO); alternate cross-link involves residue Lys388. Lys388 participates in a covalent cross-link: Glycyl lysine isopeptide (Lys-Gly) (interchain with G-Cter in ubiquitin); alternate. Phosphoserine; by CDK2 is present on Ser400. Positions 415–452 (PDFPLGPPPSLPPRAPPPRPGEAAVTAAPASASVSSAS) are disordered. Residues 418-434 (PLGPPPSLPPRAPPPRP) are compositionally biased toward pro residues. Low complexity predominate over residues 435–452 (GEAAVTAAPASASVSSAS). The segment at 456 to 548 (STLECILYKA…VYPPYLNYLR (93 aa)) is AF1; mediates transcriptional activation. Lys533 participates in a covalent cross-link: Glycyl lysine isopeptide (Lys-Gly) (interchain with G-Cter in SUMO). NR C4-type zinc fingers lie at residues 569–589 (CLICGDEASGCHYGVLTCGSC) and 605–629 (CAGRNDCIVDKIRRKNCPACRLRKC). Positions 569-641 (CLICGDEASG…AGMVLGGRKF (73 aa)) form a DNA-binding region, nuclear receptor. Ser678 carries the phosphoserine modification. Positions 681–915 (QDIQLIPPLI…EFPEMMSEVI (235 aa)) constitute an NR LBD domain. Residues 689-935 (LINLLLSIEP…MVKPLLFHKK (247 aa)) form an AF2; mediates transcriptional activation region.

The protein belongs to the nuclear hormone receptor family. As to quaternary structure, interacts with SMARD1 and UNC45A. Interacts with CUEDC2; the interaction promotes ubiquitination, decreases sumoylation, and represses transcriptional activity. Interacts with PIAS3; the interaction promotes sumoylation of PR in a hormone-dependent manner, inhibits DNA-binding, and alters nuclear export. Interacts with SP1; the interaction requires ligand-induced phosphorylation on Ser-344 by ERK1/2-MAPK. Interacts with PRMT2. Interacts with NCOA2 and NCOA1. Interacts with KLF9. Interacts with GTF2B. In terms of processing, phosphorylated on multiple serine sites. Several of these sites are hormone-dependent. Phosphorylation on Ser-294 is highly hormone-dependent and modulates ubiquitination and sumoylation on Lys-388. Phosphorylation on Ser-345 requires induction by hormone. Basal phosphorylation on Ser-81, Ser-162, Ser-190 and Ser-400 is increased in response to progesterone and can be phosphorylated in vitro by the CDK2-A1 complex. Increased levels of phosphorylation on Ser-400 also in the presence of EGF, heregulin, IGF, PMA and FBS. Phosphorylation at this site by CDK2 is ligand-independent, and increases nuclear translocation and transcriptional activity. Phosphorylation at Ser-162 and Ser-294, but not at Ser-190, is impaired during the G(2)/M phase of the cell cycle. Phosphorylation on Ser-345 by ERK1/2 MAPK is required for interaction with SP1. Sumoylation is hormone-dependent and represses transcriptional activity. Sumoylation on all three sites is enhanced by PIAS3. Desumoylated by SENP1. Sumoylation on Lys-388, the main site of sumoylation, is repressed by ubiquitination on the same site, and modulated by phosphorylation at Ser-294. Post-translationally, ubiquitination is hormone-dependent and represses sumoylation on the same site. Promoted by MAPK-mediated phosphorylation on Ser-294. In terms of processing, palmitoylated by ZDHHC7 and ZDHHC21. Palmitoylation is required for plasma membrane targeting and for rapid intracellular signaling via ERK and AKT kinases and cAMP generation.

The protein localises to the nucleus. It localises to the cytoplasm. The steroid hormones and their receptors are involved in the regulation of eukaryotic gene expression and affect cellular proliferation and differentiation in target tissues. Transcriptional activator of several progesteron-dependent promoters in a variety of cell types. Involved in activation of SRC-dependent MAPK signaling on hormone stimulation. The sequence is that of Progesterone receptor (PGR) from Pithecia irrorata (Gray monk saki).